A 367-amino-acid chain; its full sequence is MNTAVTTANSEKAKALQAALAQIEKQFGKGTIMRLGEGEAIQDIQVVSTGSLGLDIALGVGGLPRGRVIEIYGPESSGKTTLTLQVIAEMQKQGGTCAFIDAEHALDTSYAQKLGVNLNEVLISQPDTGEQALEIVDSLVRSGAVDMIVVDSVAALTPRAEIEGEMGDQLPGLQARLMSQALRKLTATIKKTNCMVIFINQIRMKIGVMFGSPETTTGGNALKFYASVRLDIRRTGTIKKGDEAIGNETKVKVVKNKVSPPFKTAEFDILFGEGISREGEILDMGVNAKILDKSGAWYAYNGEKIGQGRDNAREFLRENSGLAVEIENKVRDSLGIALLPTAGGDAPEAKAAKAGKAKADKDGVIEA.

73-80 (GPESSGKT) is an ATP binding site.

This sequence belongs to the RecA family.

It is found in the cytoplasm. Can catalyze the hydrolysis of ATP in the presence of single-stranded DNA, the ATP-dependent uptake of single-stranded DNA by duplex DNA, and the ATP-dependent hybridization of homologous single-stranded DNAs. It interacts with LexA causing its activation and leading to its autocatalytic cleavage. The protein is Protein RecA of Delftia acidovorans (strain DSM 14801 / SPH-1).